The chain runs to 717 residues: Putative amino acid transporter AAT1 (717 aa).

Residues 1-10 (MREGAFDASR) show a composition bias toward basic and acidic residues. The disordered stretch occupies residues 1-88 (MREGAFDASR…DRAQTDSRQE (88 aa)). Polar residues predominate over residues 16 to 25 (QRPSSLSTAQ). Positions 26–53 (PPSDSRPPSSSSPPSSSSSSSSASSSSP) are enriched in low complexity. Residues 74 to 88 (SAEKMDRAQTDSRQE) show a composition bias toward basic and acidic residues. Helical transmembrane passes span 124-143 (VLTL…PYAM), 149-170 (LIGL…YILM), 196-216 (AVDA…LVFL), 236-253 (HRAA…PLSV), 265-283 (FFPV…YRSL), 303-320 (FKSF…INVC), 341-358 (AALL…LGYL), and 378-402 (LMHV…IPTV). A disordered region spans residues 462-602 (GDAEYGGAEA…REEREEREGQ (141 aa)). Residues 463–477 (DAEYGGAEAGEATRG) show a composition bias toward low complexity. Residues 497–519 (ARNRDRSRLHADSERSAGDREGS) show a composition bias toward basic and acidic residues. Residues 547–558 (GSSSASSRSVDS) show a composition bias toward low complexity. Residues 584–602 (SGDREAREEREEREEREGQ) show a composition bias toward basic and acidic residues. 3 consecutive transmembrane segments (helical) span residues 622–638 (VCVA…ALVL), 644–669 (VVGL…YAGI), and 681–702 (LLMV…IIIL).

It belongs to the amino acid/polyamine transporter 2 family.

Its subcellular location is the vacuole membrane. In terms of biological role, putative amino acid transporter. Probably transports arginine. Involved in maintaining the osmotic homeostasis of the digestive vacuole. Required for extracellular parasite survival and bradyzoite differentiation. The chain is Putative amino acid transporter AAT1 from Toxoplasma gondii (strain ATCC 50611 / Me49).